We begin with the raw amino-acid sequence, 88 residues long: MEKREFNIIAETGIHARPATLLVQAASKFNSDINLEYKGKSVNLKSIMGVMSLGVGQGADVTISAEGADEADAIAAITDTMKKEGLAE.

In terms of domain architecture, HPr spans 1–88 (MEKREFNIIA…DTMKKEGLAE (88 aa)). The active-site Pros-phosphohistidine intermediate is histidine 15. A Phosphoserine; by HPrK/P modification is found at serine 46.

Belongs to the HPr family.

The protein resides in the cytoplasm. With respect to regulation, phosphorylation on Ser-46 inhibits the phosphoryl transfer from enzyme I to HPr. Functionally, general (non sugar-specific) component of the phosphoenolpyruvate-dependent sugar phosphotransferase system (sugar PTS). This major carbohydrate active-transport system catalyzes the phosphorylation of incoming sugar substrates concomitantly with their translocation across the cell membrane. The phosphoryl group from phosphoenolpyruvate (PEP) is transferred to the phosphoryl carrier protein HPr by enzyme I. Phospho-HPr then transfers it to the PTS EIIA domain. P-Ser-HPr interacts with the catabolite control protein A (CcpA), forming a complex that binds to DNA at the catabolite response elements cre, operator sites preceding a large number of catabolite-regulated genes. Thus, P-Ser-HPr is a corepressor in carbon catabolite repression (CCR), a mechanism that allows bacteria to coordinate and optimize the utilization of available carbon sources. P-Ser-HPr also plays a role in inducer exclusion, in which it probably interacts with several non-PTS permeases and inhibits their transport activity. The chain is Phosphocarrier protein HPr (ptsH) from Lacticaseibacillus casei (Lactobacillus casei).